Consider the following 156-residue polypeptide: Ribonuclease ageritin (156 aa).

The N-terminal stretch at 1 to 21 (MSESSTFTTAVVPEGEGVAPM) is a signal peptide. H98 is an active-site residue. N-linked (GlcNAc...) asparagine glycans are attached at residues N100 and N139.

This sequence belongs to the ribotoxin-like family. In terms of assembly, monomer. It depends on Mg(2+) as a cofactor.

It is found in the vacuole lumen. It catalyses the reaction a 28S rRNA containing guanosine-adenosine pair + H2O = an [RNA fragment]-3'-adenosine-3'-phosphate + a 5'-a hydroxy-guanosine-3'-[RNA fragment].. In contrast to most ribotoxins, activity is completely inhibited by EDTA. In terms of biological role, fungal ribonuclease involved in fungal defense. Highly specific and highly toxic fungal endonuclease that cleaves a single phosphodiester bond in the 28S RNA of eukaryotic ribosomes at a universally conserved GAGA tetraloop of the sarcin-ricin loop (SRL). The damage of the SRL inhibits the binding of translation elongation factors and halts protein biosynthesis, ultimately resulting in the death of the target cells. Shows antitumor activity. Exerts cytotoxicity and induces apoptosis towards rat glial cells and human glioma cells, and also displays some activity towards human neurolastoma cell lines. Shows a strong entomotoxicity against Aedes aegypti larvae, yet no nematotoxicity against nematodes. The protein is Ribonuclease ageritin of Cyclocybe aegerita (Black poplar mushroom).